We begin with the raw amino-acid sequence, 146 residues long: D-aminoacyl-tRNA deacylase (146 aa).

The Gly-cisPro motif, important for rejection of L-amino acids signature appears at 137 to 138 (GP).

It belongs to the DTD family. As to quaternary structure, homodimer.

The protein resides in the cytoplasm. The enzyme catalyses glycyl-tRNA(Ala) + H2O = tRNA(Ala) + glycine + H(+). It carries out the reaction a D-aminoacyl-tRNA + H2O = a tRNA + a D-alpha-amino acid + H(+). Functionally, an aminoacyl-tRNA editing enzyme that deacylates mischarged D-aminoacyl-tRNAs. Also deacylates mischarged glycyl-tRNA(Ala), protecting cells against glycine mischarging by AlaRS. Acts via tRNA-based rather than protein-based catalysis; rejects L-amino acids rather than detecting D-amino acids in the active site. By recycling D-aminoacyl-tRNA to D-amino acids and free tRNA molecules, this enzyme counteracts the toxicity associated with the formation of D-aminoacyl-tRNA entities in vivo and helps enforce protein L-homochirality. In Thermodesulfovibrio yellowstonii (strain ATCC 51303 / DSM 11347 / YP87), this protein is D-aminoacyl-tRNA deacylase.